We begin with the raw amino-acid sequence, 454 residues long: Repulsive guidance molecule A (454 aa).

The first 47 residues, 1-47 (MQPPRERLVVTGRAGWMGMGRGAGRSALGLWPTLAFLLCSFPAAISP), serve as a signal peptide directing secretion. Positions 48-169 (CKILKCNSEF…NYTHCGLFGD (122 aa)) are cleaved as a propeptide — removed in mature form. The segment covering 114–126 (HNCSKDGPTSQPR) has biased composition (polar residues). The interval 114–141 (HNCSKDGPTSQPRVRTLPPAGDSQERSD) is disordered. N-linked (GlcNAc...) asparagine glycans are attached at residues Asn-115 and Asn-160. 2 cysteine pairs are disulfide-bonded: Cys-146–Cys-227 and Cys-164–Cys-316. N-linked (GlcNAc...) asparagine glycosylation is present at Asn-388. Ala-427 carries the GPI-anchor amidated alanine lipid modification. The propeptide at 428–454 (AAATTFPLAPQILLGTIPLLVLLPVLW) is removed in mature form.

Belongs to the repulsive guidance molecule (RGM) family. As to quaternary structure, interacts with NEO1, BMP2 and BMP4. In terms of processing, autocatalytically cleaved at low pH; the two chains remain linked via two disulfide bonds. As to expression, expressed in gradient in periventricular layers of the developing nervous system. In adult, expressed in scattered cells throughout the brain.

It localises to the cell membrane. In terms of biological role, member of the repulsive guidance molecule (RGM) family that performs several functions in the developing and adult nervous system. Regulates cephalic neural tube closure, inhibits neurite outgrowth and cortical neuron branching, and the formation of mature synapses. Binding to its receptor NEO1/neogenin induces activation of RHOA-ROCK1/Rho-kinase signaling pathway through UNC5B-ARHGEF12/LARG-PTK2/FAK1 cascade, leading to collapse of the neuronal growth cone and neurite outgrowth inhibition. Furthermore, RGMA binding to NEO1/neogenin leads to HRAS inactivation by influencing HRAS-PTK2/FAK1-AKT1 pathway. It also functions as a bone morphogenetic protein (BMP) coreceptor that may signal through SMAD1, SMAD5, and SMAD8. This Mus musculus (Mouse) protein is Repulsive guidance molecule A (Rgma).